Consider the following 483-residue polypeptide: Glutathione reductase (483 aa).

Position 1 is an N-acetylmethionine (Met-1). Leu-2 carries the post-translational modification N-acetylserine. Ser-33 and Gly-34 together coordinate FAD. Ser-33 is a binding site for glutathione. Residue Arg-40 participates in glutathione binding. The FAD site is built by Glu-53, Thr-60, Cys-61, and Lys-69. Cys-61 and Cys-66 are joined by a disulfide. Position 123 (Tyr-123) interacts with glutathione. Ala-139 lines the FAD pocket. NADP(+) is bound by residues Ala-205, Ile-208, Glu-211, Arg-228, and Arg-234. Thr-243 is a binding site for glutathione. N-linked (GlcNAc...) asparagine glycosylation occurs at Asn-278. Gly-294 contacts NADP(+). Asp-334 provides a ligand contact to FAD. Glu-340 is a binding site for NADP(+). An FAD-binding site is contributed by Thr-342. Arg-350 is a glutathione binding site. Val-375 provides a ligand contact to NADP(+). Lys-425 is a glutathione binding site. His-472 serves as a coordination point for FAD. His-472 acts as the Proton acceptor in catalysis.

The protein belongs to the class-I pyridine nucleotide-disulfide oxidoreductase family. Homodimer. FAD serves as cofactor.

It is found in the cytoplasm. The protein resides in the nucleus. It localises to the mitochondrion. The protein localises to the peroxisome. The enzyme catalyses 2 glutathione + NADP(+) = glutathione disulfide + NADPH + H(+). Functionally, catalyzes the reduction of glutathione disulfide (GSSG) to reduced glutathione (GSH). Constitutes the major mechanism to maintain a high GSH:GSSG ratio in the cytosol. This chain is Glutathione reductase, found in Saccharomyces cerevisiae (strain ATCC 204508 / S288c) (Baker's yeast).